A 150-amino-acid chain; its full sequence is Transcription antitermination protein NusB (150 aa).

This sequence belongs to the NusB family.

Its function is as follows. Involved in transcription antitermination. Required for transcription of ribosomal RNA (rRNA) genes. Binds specifically to the boxA antiterminator sequence of the ribosomal RNA (rrn) operons. This is Transcription antitermination protein NusB from Streptococcus equi subsp. zooepidemicus (strain H70).